The following is a 97-amino-acid chain: Putative defensin-like protein 237 (97 aa).

A signal peptide spans 1–23 (MRHATSPIVFCFLIFLVMNHVKG). 4 cysteine pairs are disulfide-bonded: C30-C94, C40-C71, C48-C84, and C69-C86.

Belongs to the DEFL family.

The protein localises to the secreted. The sequence is that of Putative defensin-like protein 237 (SCRL21) from Arabidopsis thaliana (Mouse-ear cress).